A 403-amino-acid chain; its full sequence is Leu/Ile/Val-binding protein homolog 8 (403 aa).

A signal peptide spans 1–26; that stretch reads MRLSRLLIGASLGVALSSTVFTAALA.

It belongs to the leucine-binding protein family.

In terms of biological role, component of an amino-acid transport system. This is Leu/Ile/Val-binding protein homolog 8 from Brucella abortus (strain 2308).